A 229-amino-acid chain; its full sequence is NAD-dependent protein deacetylase (229 aa).

The Deacetylase sirtuin-type domain occupies Met1–Ile229. Residues Ala20, Arg32, Gln96, Ile98, Asp99, His114, Thr181, Ser182, Asn205, and Val223 each coordinate NAD(+). Nicotinamide is bound by residues Ile98 and Asp99. His114 serves as the catalytic Proton acceptor.

The protein belongs to the sirtuin family. Class U subfamily.

Its subcellular location is the cytoplasm. It catalyses the reaction N(6)-acetyl-L-lysyl-[protein] + NAD(+) + H2O = 2''-O-acetyl-ADP-D-ribose + nicotinamide + L-lysyl-[protein]. NAD-dependent protein deacetylase which modulates the activities of several enzymes which are inactive in their acetylated form. The polypeptide is NAD-dependent protein deacetylase (Listeria innocua serovar 6a (strain ATCC BAA-680 / CLIP 11262)).